A 284-amino-acid chain; its full sequence is Bifunctional protein FolD (284 aa).

Residues 166–168 and Ser-191 contribute to the NADP(+) site; that span reads GRS.

Belongs to the tetrahydrofolate dehydrogenase/cyclohydrolase family. Homodimer.

It catalyses the reaction (6R)-5,10-methylene-5,6,7,8-tetrahydrofolate + NADP(+) = (6R)-5,10-methenyltetrahydrofolate + NADPH. The catalysed reaction is (6R)-5,10-methenyltetrahydrofolate + H2O = (6R)-10-formyltetrahydrofolate + H(+). Its pathway is one-carbon metabolism; tetrahydrofolate interconversion. Functionally, catalyzes the oxidation of 5,10-methylenetetrahydrofolate to 5,10-methenyltetrahydrofolate and then the hydrolysis of 5,10-methenyltetrahydrofolate to 10-formyltetrahydrofolate. This is Bifunctional protein FolD from Leptospira borgpetersenii serovar Hardjo-bovis (strain JB197).